Here is a 373-residue protein sequence, read N- to C-terminus: Dual-specificity RNA methyltransferase RlmN (373 aa).

Catalysis depends on Glu94, which acts as the Proton acceptor. In terms of domain architecture, Radical SAM core spans 100–339 (DGDRATLCVS…VTVRKTRGDD (240 aa)). A disulfide bridge connects residues Cys107 and Cys344. Positions 114, 118, and 121 each coordinate [4Fe-4S] cluster. Residues 168–169 (GE), Ser200, 222–224 (SLH), and Asn301 contribute to the S-adenosyl-L-methionine site. Cys344 serves as the catalytic S-methylcysteine intermediate.

Belongs to the radical SAM superfamily. RlmN family. Requires [4Fe-4S] cluster as cofactor.

It localises to the cytoplasm. It carries out the reaction adenosine(2503) in 23S rRNA + 2 reduced [2Fe-2S]-[ferredoxin] + 2 S-adenosyl-L-methionine = 2-methyladenosine(2503) in 23S rRNA + 5'-deoxyadenosine + L-methionine + 2 oxidized [2Fe-2S]-[ferredoxin] + S-adenosyl-L-homocysteine. It catalyses the reaction adenosine(37) in tRNA + 2 reduced [2Fe-2S]-[ferredoxin] + 2 S-adenosyl-L-methionine = 2-methyladenosine(37) in tRNA + 5'-deoxyadenosine + L-methionine + 2 oxidized [2Fe-2S]-[ferredoxin] + S-adenosyl-L-homocysteine. Its function is as follows. Specifically methylates position 2 of adenine 2503 in 23S rRNA and position 2 of adenine 37 in tRNAs. m2A2503 modification seems to play a crucial role in the proofreading step occurring at the peptidyl transferase center and thus would serve to optimize ribosomal fidelity. In Photobacterium profundum (strain SS9), this protein is Dual-specificity RNA methyltransferase RlmN.